The following is a 290-amino-acid chain: Pyridoxal kinase PdxY (290 aa).

Residues Ser-12 and 47 to 48 contribute to the substrate site; that span reads TQ. ATP contacts are provided by residues Asp-114, Glu-151, Lys-184, and 211-214; that span reads RPLL. A substrate-binding site is contributed by Asp-225.

Belongs to the pyridoxine kinase family. PdxY subfamily. As to quaternary structure, homodimer. Mg(2+) serves as cofactor.

It catalyses the reaction pyridoxal + ATP = pyridoxal 5'-phosphate + ADP + H(+). It participates in cofactor metabolism; pyridoxal 5'-phosphate salvage; pyridoxal 5'-phosphate from pyridoxal: step 1/1. Functionally, pyridoxal kinase involved in the salvage pathway of pyridoxal 5'-phosphate (PLP). Catalyzes the phosphorylation of pyridoxal to PLP. The chain is Pyridoxal kinase PdxY from Pseudomonas putida (strain ATCC 700007 / DSM 6899 / JCM 31910 / BCRC 17059 / LMG 24140 / F1).